We begin with the raw amino-acid sequence, 2435 residues long: ATP-binding cassette sub-family A member 2 (2435 aa).

Asn14 is a glycosylation site (N-linked (GlcNAc...) asparagine). 2 consecutive transmembrane segments (helical) span residues 22-42 (PWVL…LLGL) and 54-74 (AFYT…QSLC). 3 N-linked (GlcNAc...) asparagine glycosylation sites follow: Asn89, Asn168, and Asn173. Residue Gln271 is modified to N5-methylglutamine. Asn305, Asn368, Asn379, Asn420, Asn432, Asn476, Asn484, Asn494, Asn530, Asn544, Asn590, Asn600, and Asn628 each carry an N-linked (GlcNAc...) asparagine glycan. Transmembrane regions (helical) follow at residues 699–719 (FLFV…VYSV), 750–770 (VAWF…LTAI), 782–802 (VVII…FCFL), 813–833 (ASAC…YVAI), 857–877 (AFGL…GIQW), and 893–913 (LLAV…TWYI). Residues 990-1221 (VCVDKLTKVY…YGDGYRLTLV (232 aa)) form the ABC transporter 1 domain. 1024 to 1031 (GHNGAGKT) provides a ligand contact to ATP. Disordered stretches follow at residues 1223 to 1243 (RPAE…PGRA) and 1325 to 1357 (DQSL…GHAG). A phosphoserine mark is found at Ser1238, Ser1327, and Ser1331. Residues 1333–1342 (ADVKESRKDV) show a composition bias toward basic and acidic residues. N-linked (GlcNAc...) asparagine glycosylation is present at Asn1408. Residues 1456 to 1476 (ALFSQILLPAFFVCVAMTVAL) form a helical membrane-spanning segment. Residues Asn1496, Asn1549, and Asn1557 are each glycosylated (N-linked (GlcNAc...) asparagine). Residues 1586–1610 (SNFVPPPPSPAPSDSPASPDEDLQA) are disordered. Residues 1589 to 1598 (VPPPPSPAPS) are compositionally biased toward pro residues. N-linked (GlcNAc...) asparagine glycosylation is found at Asn1612, Asn1677, and Asn1775. 5 consecutive transmembrane segments (helical) span residues 1792 to 1812 (VVIA…FVVF), 1841 to 1861 (VWDM…LFVF), 1872 to 1892 (FPAV…IMYP), 1905 to 1925 (VFLI…TFLL), and 1991 to 2011 (GLVA…MCQY). One can recognise an ABC transporter 2 domain in the interval 2050-2285 (VKIENLTKVY…FGDGYMITVR (236 aa)). Asn2054 carries N-linked (GlcNAc...) asparagine glycosylation. An ATP-binding site is contributed by 2087–2094 (GVNGAGKT). Thr2412 is modified (phosphothreonine).

It belongs to the ABC transporter superfamily. ABCA family. Post-translationally, methylated at Gln-271 by N6AMT1. As to expression, highly expressed in the brain,peripheral blood leukocytes and ovary, whereas lower levels of expression is observed in kidney and liver. In terms of tissue distribution, weakly expressed in brain and highly in peripheral blood leukocytes.

It localises to the endosome membrane. It is found in the lysosome membrane. In terms of biological role, probable lipid transporter that modulates cholesterol sequestration in the late endosome/lysosome by regulating the intracellular sphingolipid metabolism, in turn participates in cholesterol homeostasis. May alter the transbilayer distribution of ceramide in the intraluminal membrane lipid bilayer, favoring its retention in the outer leaflet that results in increased acid ceramidase activity in the late endosome/lysosome, facilitating ceramide deacylation to sphingosine leading to the sequestration of free cholesterol in lysosomes. In addition regulates amyloid-beta production either by activating a signaling pathway that regulates amyloid precursor protein transcription through the modulation of sphingolipid metabolism or through its role in gamma-secretase processing of APP. May play a role in myelin formation. The chain is ATP-binding cassette sub-family A member 2 from Homo sapiens (Human).